Reading from the N-terminus, the 171-residue chain is Ribosome maturation factor RimM (171 aa).

Positions 96–170 (AEGEYYYHEI…LVTIHVTEGL (75 aa)) constitute a PRC barrel domain.

Belongs to the RimM family. Binds ribosomal protein uS19.

It localises to the cytoplasm. Its function is as follows. An accessory protein needed during the final step in the assembly of 30S ribosomal subunit, possibly for assembly of the head region. Essential for efficient processing of 16S rRNA. May be needed both before and after RbfA during the maturation of 16S rRNA. It has affinity for free ribosomal 30S subunits but not for 70S ribosomes. In Bacillus anthracis (strain A0248), this protein is Ribosome maturation factor RimM.